The sequence spans 37 residues: Large ribosomal subunit protein bL36c (37 aa).

This sequence belongs to the bacterial ribosomal protein bL36 family.

The protein localises to the plastid. It localises to the chloroplast. This Adiantum capillus-veneris (Maidenhair fern) protein is Large ribosomal subunit protein bL36c.